A 337-amino-acid chain; its full sequence is UDP-glucose 4-epimerase (337 aa).

NAD(+) contacts are provided by residues 11-12, 31-36, 58-59, 80-84, Asn-99, Ser-124, Tyr-149, Lys-153, and Phe-178; these read YI, DNLSNA, DL, and FAGLK. Ser-124 and Tyr-149 together coordinate substrate. Tyr-149 serves as the catalytic Proton acceptor. Substrate-binding positions include Asn-179, 199-200, 216-218, Arg-231, and 292-295; these read NL, GIF, and RDGD.

This sequence belongs to the NAD(P)-dependent epimerase/dehydratase family. As to quaternary structure, homodimer. NAD(+) is required as a cofactor.

The enzyme catalyses UDP-alpha-D-glucose = UDP-alpha-D-galactose. It functions in the pathway carbohydrate metabolism; galactose metabolism. Involved in the metabolism of galactose. Catalyzes the conversion of UDP-galactose (UDP-Gal) to UDP-glucose (UDP-Glc) through a mechanism involving the transient reduction of NAD. The chain is UDP-glucose 4-epimerase (galE) from Erwinia amylovora (Fire blight bacteria).